The following is a 221-amino-acid chain: MSPITIALPKGRPYAATVRFLREAGLAGPELEPEEGRSLYVECPAQGTRFIIARDSDVPTYVEYGAADLGIVGKNVLMELEPQVYELLDLGYSQCRFVLAAPAGVDPRQLLSGRSRQRVATKYPRMTEAYFNSRGLQVETIFLHGSIEVAPKVGLADLIVDIVETGRTLRENNLVVVEELWTSSMRLIANRAAYRLRAERIGPMVQRLRELVSRRAVAANA.

It belongs to the ATP phosphoribosyltransferase family. Short subfamily. Heteromultimer composed of HisG and HisZ subunits.

It localises to the cytoplasm. The catalysed reaction is 1-(5-phospho-beta-D-ribosyl)-ATP + diphosphate = 5-phospho-alpha-D-ribose 1-diphosphate + ATP. It functions in the pathway amino-acid biosynthesis; L-histidine biosynthesis; L-histidine from 5-phospho-alpha-D-ribose 1-diphosphate: step 1/9. In terms of biological role, catalyzes the condensation of ATP and 5-phosphoribose 1-diphosphate to form N'-(5'-phosphoribosyl)-ATP (PR-ATP). Has a crucial role in the pathway because the rate of histidine biosynthesis seems to be controlled primarily by regulation of HisG enzymatic activity. In Symbiobacterium thermophilum (strain DSM 24528 / JCM 14929 / IAM 14863 / T), this protein is ATP phosphoribosyltransferase.